A 565-amino-acid chain; its full sequence is MMLVVSENYLLSPSLYLKALKLCSYQNVKKQLLLIHGNSITNGFCSNLQLKDMLIDLYLKQGDVKHARKLFDRISKRDVVSWTAMISRFSRCGYHPDALLLFKEMHREDVKANQFTYGSVLKSCKDLGCLKEGMQIHGSVEKGNCAGNLIVRSALLSLYARCGKMEEARLQFDSMKERDLVSWNAMIDGYTANACADTSFSLFQLMLTEGKKPDCFTFGSLLRASIVVKCLEIVSELHGLAIKLGFGRSSALIRSLVNAYVKCGSLANAWKLHEGTKKRDLLSCTALITGFSQQNNCTSDAFDIFKDMIRMKTKMDEVVVSSMLKICTTIASVTIGRQIHGFALKSSQIRFDVALGNSLIDMYAKSGEIEDAVLAFEEMKEKDVRSWTSLIAGYGRHGNFEKAIDLYNRMEHERIKPNDVTFLSLLSACSHTGQTELGWKIYDTMINKHGIEAREEHLSCIIDMLARSGYLEEAYALIRSKEGIVSLSSSTWGAFLDACRRHGNVQLSKVAATQLLSMEPRKPVNYINLASVYAANGAWDNALNTRKLMKESGSCNKAPGYSLVY.

PPR repeat units lie at residues 12-46, 47-77, 78-112, 113-147, 148-178, 179-213, 214-248, 249-279, 280-315, 316-351, 352-382, 383-417, 418-448, and 454-484; these read SPSL…GFCS, NLQL…ISKR, DVVS…DVKA, NQFT…NCAG, NLIV…MKER, DLVS…GKKP, DCFT…GFGR, SSAL…TKKR, DLLS…KTKM, DEVV…QIRF, DVAL…MKEK, DVRS…RIKP, NDVT…MINK, and REEH…KEGI. Residues 491-565 are type E motif; degenerate; that stretch reads TWGAFLDACR…NKAPGYSLVY (75 aa).

The protein belongs to the PPR family. PCMP-E subfamily.

The protein is Pentatricopeptide repeat-containing protein At3g20730 (PCMP-E94) of Arabidopsis thaliana (Mouse-ear cress).